Reading from the N-terminus, the 627-residue chain is Myelin-associated glycoprotein (627 aa).

Residues 1–19 (MIFLATLPLFWIMISASRG) form the signal peptide. The segment at 20–325 (GHWGAWMPST…RTVELSVMYA (306 aa)) is interaction with RTN4R and RTN4RL2. Residues 20–516 (GHWGAWMPST…HRLMWAKIGP (497 aa)) lie on the Extracellular side of the membrane. A glycan (C-linked (Man) tryptophan) is linked at tryptophan 22. In terms of domain architecture, Ig-like V-type spans 22–120 (WGAWMPSTIS…LGGKYYFRGD (99 aa)). Intrachain disulfides connect cysteine 37–cysteine 165, cysteine 42–cysteine 100, and cysteine 159–cysteine 217. 65–67 (YPK) contacts a ganglioside GT1b (d18:1(4E)). Asparagine 99 is a glycosylation site (N-linked (GlcNAc...) asparagine). A ganglioside GT1b (d18:1(4E)) contacts are provided by residues arginine 118 and 124–128 (YNQYT). Ig-like C2-type domains lie at 139–237 (NTPN…LDVK), 241–325 (VIVE…VMYA), 327–412 (WKPT…VEFA), and 413–508 (PIIL…GAHR). 2 N-linked (GlcNAc...) asparagine glycosylation sites follow: asparagine 223 and asparagine 246. A disulfide bond links cysteine 261 and cysteine 305. Residues asparagine 315 and asparagine 332 are each glycosylated (N-linked (GlcNAc...) asparagine). A disulfide bridge connects residues cysteine 347 and cysteine 392. Asparagine 406 carries N-linked (GlcNAc...) asparagine glycosylation. 2 cysteine pairs are disulfide-bonded: cysteine 421–cysteine 430 and cysteine 432–cysteine 488. Residues asparagine 450 and asparagine 454 are each glycosylated (N-linked (GlcNAc...) asparagine). A helical membrane pass occupies residues 517-536 (VGAVVAFAILIAIVCYITQT). Cysteine 531 carries S-palmitoyl cysteine lipidation. The Cytoplasmic portion of the chain corresponds to 537–627 (RRKKNVTESS…LAEYAEIRVK (91 aa)). Serine 545, serine 547, serine 549, and serine 591 each carry phosphoserine. Positions 578–627 (LGSERRLLGLRGESPELDLSYSHSDLGKRPTKDSYTLTEELAEYAEIRVK) are required for normal axon myelination in the central nervous system.

Belongs to the immunoglobulin superfamily. SIGLEC (sialic acid binding Ig-like lectin) family. As to quaternary structure, monomer and homodimer. Interacts (via the first three N-terminal Ig-like domains) with RTN4R and RTN4RL2. Interacts with isoform 2 of BSG. Post-translationally, N-glycosylated. In terms of processing, phosphorylated on tyrosine residues. Ubiquitinated, leading to proteasomal degradation. As to expression, detected in the myelin tract in brain, especially in the corpus callosum and in peripheral nerve. Expressed by myelinating glial cells in the central and peripheral nervous system. Detected in oligodendrocyte processes before formation of compact myelin. Restricted to the periaxonal space after myelination. Isoform S-MAG is the predominant isoform in CNS and PNS of the adult (at protein level).

Its subcellular location is the cell membrane. The protein localises to the membrane raft. In terms of biological role, adhesion molecule that mediates interactions between myelinating cells and neurons by binding to neuronal sialic acid-containing gangliosides and to the glycoproteins RTN4R and RTN4RL2. Not required for initial myelination, but seems to play a role in the maintenance of normal axon myelination. Protects motoneurons against apoptosis, also after injury; protection against apoptosis is probably mediated via interaction with neuronal RTN4R and RTN4RL2. Required to prevent degeneration of myelinated axons in adults; this probably depends on binding to gangliosides on the axon cell membrane. Negative regulator of neurite outgrowth that inhibits axon longitudinal growth. Negative regulator of neurite outgrowth; in dorsal root ganglion neurons the inhibition is mediated primarily via binding to neuronal RTN4R or RTN4RL2 and to a lesser degree via binding to neuronal gangliosides. In cerebellar granule cells the inhibition is mediated via binding to neuronal gangliosides. In sensory neurons, inhibition of neurite extension depends only partially on RTN4R, RTN4RL2 and gangliosides. Inhibits axon outgrowth by binding to RTN4R. Preferentially binds to alpha-2,3-linked sialic acid. Binds ganglioside Gt1b. This chain is Myelin-associated glycoprotein (Mag), found in Mus musculus (Mouse).